The primary structure comprises 204 residues: Octanoyltransferase (204 aa).

The region spanning 27-202 (QGGEEALLLL…RFQPLLNLHL (176 aa)) is the BPL/LPL catalytic domain. Substrate is bound by residues 65–72 (RGGDVTYH), 132–134 (SIG), and 145–147 (GFA). The active-site Acyl-thioester intermediate is Cys-163.

The protein belongs to the LipB family.

Its subcellular location is the cytoplasm. It carries out the reaction octanoyl-[ACP] + L-lysyl-[protein] = N(6)-octanoyl-L-lysyl-[protein] + holo-[ACP] + H(+). The protein operates within protein modification; protein lipoylation via endogenous pathway; protein N(6)-(lipoyl)lysine from octanoyl-[acyl-carrier-protein]: step 1/2. In terms of biological role, catalyzes the transfer of endogenously produced octanoic acid from octanoyl-acyl-carrier-protein onto the lipoyl domains of lipoate-dependent enzymes. Lipoyl-ACP can also act as a substrate although octanoyl-ACP is likely to be the physiological substrate. This Citrifermentans bemidjiense (strain ATCC BAA-1014 / DSM 16622 / JCM 12645 / Bem) (Geobacter bemidjiensis) protein is Octanoyltransferase.